The chain runs to 729 residues: Cytoplasmic polyadenylation element-binding protein 4 (729 aa).

2 disordered regions span residues 20-49 (FPVR…NNNT) and 78-133 (EKAK…KEKI). Residues 24–35 (FHPHLQPPHHHQ) are compositionally biased toward basic residues. Residues 83–96 (QQQEQQDPLEKQQL) are compositionally biased toward low complexity. A phosphoserine mark is found at S97, S99, and S137. Positions 218–328 (FGGSFSPQIG…RGLNGGITPL (111 aa)) are disordered. Over residues 232–249 (HHPHHPHFQHHHSQHQQQ) the composition is skewed to basic residues. S252 and S255 each carry phosphoserine. A compositionally biased stretch (low complexity) spans 285-300 (WSSYQSPSPTPSSSWS). A compositionally biased stretch (gly residues) spans 301–313 (PGGGGYGGWGGSQ). At T326 the chain carries Phosphothreonine. Phosphoserine is present on residues S330 and S332. 2 consecutive RRM domains span residues 472-563 (RKVF…PWNL) and 580-662 (KTIF…PYVL). Residues 541 to 543 (KLY) are RNA-binding. Positions 667, 675, 684, 689, 694, 697, 702, and 710 each coordinate Zn(2+).

It belongs to the RRM CPEB family. Interacts with TOB1. In terms of tissue distribution, expressed in pancreas in islets and ductal cells (at protein level). Expressed in melanocytes.

The protein localises to the cytoplasm. It localises to the cell projection. It is found in the dendrite. The protein resides in the dendritic spine. Its subcellular location is the postsynaptic density. The protein localises to the axon. It localises to the growth cone. It is found in the endoplasmic reticulum. The protein resides in the perinuclear region. Functionally, sequence-specific RNA-binding protein that binds to the cytoplasmic polyadenylation element (CPE), an uridine-rich sequence element (consensus sequence 5'-UUUUUAU-3') within the mRNA 3'-UTR. RNA binding results in a clear conformational change analogous to the Venus fly trap mechanism. Regulates activation of unfolded protein response (UPR) in the process of adaptation to ER stress in liver, by maintaining translation of CPE-regulated mRNAs in conditions in which global protein synthesis is inhibited. Required for cell cycle progression, specifically for cytokinesis and chromosomal segregation. Plays a role as an oncogene promoting tumor growth and progression by positively regulating translation of t-plasminogen activator/PLAT. Stimulates proliferation of melanocytes. In contrast to CPEB1 and CPEB3, does not play role in synaptic plasticity, learning and memory. This Homo sapiens (Human) protein is Cytoplasmic polyadenylation element-binding protein 4 (CPEB4).